We begin with the raw amino-acid sequence, 235 residues long: Dual specificity protein phosphatase 15 (235 aa).

Residue G2 is the site of N-myristoyl glycine attachment. The region spanning 4-144 is the Tyrosine-protein phosphatase domain; the sequence is GMTKVLPGLY…LEEFGWANSQ (141 aa). C88 functions as the Phosphocysteine intermediate in the catalytic mechanism. Positions 183-193 are enriched in low complexity; that stretch reads AASATTASSAA. The interval 183–212 is disordered; it reads AASATTASSAAEGTLQRLVPRSPRDSHQPL.

This sequence belongs to the protein-tyrosine phosphatase family. Non-receptor class dual specificity subfamily. In terms of tissue distribution, isoform 1 is expressed in testis; predominantly in developing spermatocytes (at protein level). Isoform 2 is highly expressed in testis. Expressed in spinal cord and specifically in oligodendroglial cells. Expressed in embryonic brain cortex; down-regulated in mice with experimental autoimmune encephalomyelitis (EAE).

It localises to the cell membrane. It catalyses the reaction O-phospho-L-tyrosyl-[protein] + H2O = L-tyrosyl-[protein] + phosphate. The enzyme catalyses O-phospho-L-seryl-[protein] + H2O = L-seryl-[protein] + phosphate. It carries out the reaction O-phospho-L-threonyl-[protein] + H2O = L-threonyl-[protein] + phosphate. Functionally, may dephosphorylate MAPK13, ATF2, ERBB3, PDGFRB and SNX6. Its function is as follows. May play a role in the regulation of oligodendrocyte differentiation. May play a role in the regulation of myelin formation. Involved in the regulation of Erk1/2 phosphorylation in Schwann cells; the signaling may be linked to the regulation of myelination. The polypeptide is Dual specificity protein phosphatase 15 (Mus musculus (Mouse)).